Here is a 411-residue protein sequence, read N- to C-terminus: POU domain, class 4, transcription factor 2 (411 aa).

Positions 29 to 95 (LHSASPGSSA…SEAMRRACLP (67 aa)) are disordered. Residues 31–52 (SASPGSSAPAAPSASSPSSSSN) are compositionally biased toward low complexity. 2 stretches are compositionally biased toward gly residues: residues 53-68 (AGGG…GGGR) and 76-86 (GSGGSGGGGGS). Residues 93–239 (CLPTPPSNIF…MHQAALSMAH (147 aa)) form a required for transcriptional activation region. The POU-IV box motif lies at 112–121 (RAEALAAVDI). The segment covering 154 to 168 (SAASSSSVPISHPSA) has biased composition (low complexity). Residues 154-190 (SAASSSSVPISHPSALAGTHHHHHHHHHHHHQPHQAL) form a disordered region. Basic residues predominate over residues 172–186 (THHHHHHHHHHHHQP). A Nuclear speckle targeting signal motif is present at residues 173–187 (HHHHHHHHHHHHQPH). The interval 240–411 (AHGLPSHMGC…QKRMKYSAGI (172 aa)) is required for DNA-binding and transcriptional repression. A POU-specific domain is found at 252–329 (DVDADPRDLE…ILQAWLEEAE (78 aa)). Residues 347 to 406 (KKRKRTSIAAPEKRSLEAYFAIQPRPSSEKIAAIAEKLDLKKNVVRVWFCNQRQKQKRMK) constitute a DNA-binding region (homeobox).

This sequence belongs to the POU transcription factor family. Class-4 subfamily. In terms of assembly, isoform 2: Interacts with POU4F1 isoform 1; this interaction inhibits both POU4F1 DNA-binding and transcriptional activities. Isoform 2: Interacts (C-terminus) with ESR1 (via DNA-binding domain); this interaction increases the estrogen receptor ESR1 transcriptional activity in a DNA- and ligand 17-beta-estradiol-independent manner. Isoform 2: Interacts (via C-terminus) with TP53 (via N-terminus). Interacts with DLX1 (via homeobox DNA-binding domain); this interaction suppresses DLX1-mediated transcriptional activity in postnatal retina enhancing retinal ganglion cell (RGC) differentiation. Interacts with DLX2 (via homeobox DNA-binding domain); this interaction enhances RGC differentiation. Isoform 1: Interacts (via C-terminus) with ISL1 (via C-terminus). Isoform 1: Interacts with ISL2. Isoform 1: Interacts with LHX2. Expressed in retinal ganglion cells (RGCs). Expressed in mature osteoclasts. Expressed in cells of layers of the superior colliculus and the adjacent periaqueductal gray (at protein level). Expressed in the brain, peripheral sensory nervous system and retina. Expressed in the optical, intermediate, and deep gray areas of the superior colliculus, the dorsal column of the mesencephalic and pontine central gray, and the lateral interpeduncular nucleus of the brain. Expressed predominantly in postmitotic, terminally differentiated neurons. Expressed in ganglion cell layer (GCL) of the retina.

It localises to the nucleus. It is found in the nucleus speckle. Its subcellular location is the cytoplasm. In terms of biological role, tissue-specific DNA-binding transcription factor involved in the development and differentiation of target cells. Functions either as activator or repressor by modulating the rate of target gene transcription through RNA polymerase II enzyme in a promoter-dependent manner. Binds to the consensus octamer motif 5'-AT[A/T]A[T/A]T[A/T]A-3' of promoter of target genes. Plays a fundamental role in the gene regulatory network essential for retinal ganglion cell (RGC) differentiation. Binds to an octamer site to form a ternary complex with ISL1; cooperates positively with ISL1 and ISL2 to potentiate transcriptional activation of RGC target genes being involved in RGC fate commitment in the developing retina and RGC axon formation and pathfinding. Inhibits DLX1 and DLX2 transcriptional activities preventing DLX1- and DLX2-mediated ability to promote amacrine cell fate specification. In cooperation with TP53 potentiates transcriptional activation of BAX promoter activity increasing neuronal cell apoptosis. Negatively regulates BAX promoter activity in the absence of TP53. Acts as a transcriptional coactivator via its interaction with the transcription factor ESR1 by enhancing its effect on estrogen response element (ERE)-containing promoter. Antagonizes the transcriptional stimulatory activity of POU4F1 by preventing its binding to an octamer motif. Involved in TNFSF11-mediated terminal osteoclast differentiation. The protein is POU domain, class 4, transcription factor 2 of Mus musculus (Mouse).